The following is a 354-amino-acid chain: MQLQTTYPNNNYPIIVEHNAFEELSEYIQDYDKVFLIIDEYVDFNFKTKFMPFLESTHIYKIIVPAGEKMKSFEHYQQTLEHLLEYNLTRNTCLVAIGGGATGDFTGFLASSLLRGVDFIQVPTTILAHDSSVGGKVGINSIHGKNLIGAFYRPKAVIYDLNFLATLPYDEILSGYAEVYKHALLTGQVAVDDIEKHFSTKEKLQSLNDIDQFIFKGIKAKLNVIIKDEKEHNMRKYLNLGHTFGHAVEYKTKIPHGHAVMIGIIYQFIVANTLLDTQFDISYYANYLKKLHYPVQIVQQLNFDDMYHYMLTDKKNNGEGIQMVLLEELGKPRVCHVEKTILIKAFNDLQLVLK.

Residues 100–104 (GATGD), 124–125 (TT), K136, K145, and 163–166 (FLAT) contribute to the NAD(+) site. Zn(2+) is bound by residues E178, H242, and H256.

This sequence belongs to the sugar phosphate cyclases superfamily. Dehydroquinate synthase family. It depends on Co(2+) as a cofactor. Zn(2+) is required as a cofactor. Requires NAD(+) as cofactor.

It localises to the cytoplasm. The enzyme catalyses 7-phospho-2-dehydro-3-deoxy-D-arabino-heptonate = 3-dehydroquinate + phosphate. The protein operates within metabolic intermediate biosynthesis; chorismate biosynthesis; chorismate from D-erythrose 4-phosphate and phosphoenolpyruvate: step 2/7. Catalyzes the conversion of 3-deoxy-D-arabino-heptulosonate 7-phosphate (DAHP) to dehydroquinate (DHQ). This Staphylococcus haemolyticus (strain JCSC1435) protein is 3-dehydroquinate synthase.